The sequence spans 167 residues: Multifunctional Ser/Thr-tRNA deacylase ProXp-y (167 aa).

It localises to the cytoplasm. It carries out the reaction L-seryl-tRNA(Lys) + H2O = tRNA(Lys) + L-serine. The enzyme catalyses L-threonyl-tRNA(Lys) + H2O = tRNA(Lys) + L-threonine. It catalyses the reaction L-homoseryl-tRNA(Lys) + H2O = tRNA(Lys) + L-homoserine + H(+). The catalysed reaction is L-seryl-tRNA(Ala) + H2O = tRNA(Ala) + L-serine. It carries out the reaction L-homoseryl-tRNA(Ser) + H2O = tRNA(Ser) + L-homoserine + H(+). The enzyme catalyses L-seryl-tRNA(Thr) + H2O = tRNA(Thr) + L-serine. It catalyses the reaction L-threonyl-tRNA(Ile) + H2O = tRNA(Ile) + L-threonine. The catalysed reaction is L-threonyl-tRNA(Val) + H2O = tRNA(Val) + L-threonine. It carries out the reaction L-threonyl-tRNA(Ser) + H2O = tRNA(Ser) + L-threonine. In terms of biological role, an aminoacyl-tRNA editing enzyme that deacylates Ser-tRNA and/or Thr-tRNA mischarged by lysyl-tRNA synthetase (LysRS), threonyl-tRNA synthetase (ThrRS), seryl-tRNA synthetase (SerRS), alanyl-tRNA synthetase (AlaRS), valyl-tRNA synthetase (ValRS) and isoleucyl-tRNA synthetase (IleRS) in vitro. Also deacylates mischarged Hse-tRNA(Lys) and Hse-tRNA(Ser), and cognate Ser-tRNA(Ser) and Thr-tRNA(Thr) in vitro. The presence of cognate ThrRS abolishes the Thr-tRNA(Thr) deacylase activity, hence this activity is not applicable physiologically. Not able to remove the amino acid moiety from cognate Val-tRNA(Val), Ile-tRNA(Ile), Lys-tRNA(Lys), Ala-tRNA(Ala) or Pro-tRNA(Pro), or from incorrectly charged Ala-tRNA(Pro), Cys-tRNA(Pro) or Leu-tRNA(Pro) in vitro. May be required in vivo to prevent mistranslation and to maintain growth when the error prone stress-inducible lysyl-tRNA synthetase (LysU) is expressed under environmental pressure. The sequence is that of Multifunctional Ser/Thr-tRNA deacylase ProXp-y from Escherichia coli O157:H7.